Consider the following 102-residue polypeptide: Large ribosomal subunit protein bL21 (102 aa).

Belongs to the bacterial ribosomal protein bL21 family. In terms of assembly, part of the 50S ribosomal subunit. Contacts protein L20.

In terms of biological role, this protein binds to 23S rRNA in the presence of protein L20. The sequence is that of Large ribosomal subunit protein bL21 from Lachnospira eligens (strain ATCC 27750 / DSM 3376 / VPI C15-48 / C15-B4) (Eubacterium eligens).